Reading from the N-terminus, the 873-residue chain is Leucine--tRNA ligase (873 aa).

Positions 42–52 (PYPSGKLHMGH) match the 'HIGH' region motif. The short motif at 628–632 (KMSKS) is the 'KMSKS' region element. Residue lysine 631 coordinates ATP.

The protein belongs to the class-I aminoacyl-tRNA synthetase family.

The protein localises to the cytoplasm. It catalyses the reaction tRNA(Leu) + L-leucine + ATP = L-leucyl-tRNA(Leu) + AMP + diphosphate. The polypeptide is Leucine--tRNA ligase (Azoarcus sp. (strain BH72)).